A 199-amino-acid chain; its full sequence is 7-methyl-GTP pyrophosphatase (199 aa).

The Proton acceptor role is filled by D73.

It belongs to the Maf family. YceF subfamily. The cofactor is a divalent metal cation.

The protein localises to the cytoplasm. The enzyme catalyses N(7)-methyl-GTP + H2O = N(7)-methyl-GMP + diphosphate + H(+). Functionally, nucleoside triphosphate pyrophosphatase that hydrolyzes 7-methyl-GTP (m(7)GTP). May have a dual role in cell division arrest and in preventing the incorporation of modified nucleotides into cellular nucleic acids. This is 7-methyl-GTP pyrophosphatase from Bordetella pertussis (strain Tohama I / ATCC BAA-589 / NCTC 13251).